The sequence spans 574 residues: MSYRAGDAARRARERYELKQAAAEFYRKLSVTERLEEALNSTFCLGPEDVYGHLANYFAQFSKPPTICQIRGRKVLDGTGEPTVEAEVFCTVKNMDKRICSSVISAASEHPKASKGPEQESNHSADIAIQWLNDLSPKLRGMSPDEQNKIDQLLSDFYQPKIEEEKERRQMEREASPMPLQPEPSPVTSPAPGKKKGSGKGKKAAVVEKPIPPEETPEAVVPGSPAIGALSLAVAKASSVLSKTPLYLHIRALRNEKLPTEFFMPTPMISILSCGTSSPGKLNLMKEVLIIPQTGLTVQQSLDMALMLQNQIVKQINAASKTGPAIKNVSPLGCMLIGGDRIEQPLDLICEACQHVGLELGTNLYLAINCAAHELMDYNKGKYEVLSGTFKSPDEMIDLYVDLINRQPAILALLDPLRKEDTVQWESLAKALGSKCYLFADAASKPVCKLLESGSMNSPPCSGTVIKHTNEITISQLLGVFKLIEGENRVAVLGCPYKESVGDSTADLAVGLGARFVKLGGLLRGERTTKYNRLLAIEDELTQAGALGFWTKNEFPVLCEVQNQPGPQETPETQ.

The segment covering 165–175 (EKERRQMEREA) has biased composition (basic and acidic residues). Residues 165-221 (EKERRQMEREASPMPLQPEPSPVTSPAPGKKKGSGKGKKAAVVEKPIPPEETPEAVV) are disordered. Residues 179–189 (PLQPEPSPVTS) are compositionally biased toward pro residues. Residues 193–203 (GKKKGSGKGKK) show a composition bias toward basic residues. Substrate is bound at residue E287. Residue K467 is the Proton acceptor of the active site. K518 contacts substrate.

This sequence belongs to the enolase family.

It catalyses the reaction (2R)-2-phosphoglycerate = phosphoenolpyruvate + H2O. It functions in the pathway carbohydrate degradation; glycolysis; pyruvate from D-glyceraldehyde 3-phosphate: step 4/5. This Xenopus tropicalis (Western clawed frog) protein is Enolase 4 (eno4).